We begin with the raw amino-acid sequence, 708 residues long: Nicastrin (708 aa).

Positions 1–34 (MATARGGSGPDPGSRGLLLLSFSVVLAGLCGGNS) are cleaved as a signal peptide. Topologically, residues 35-668 (VERKIYIPLN…IFLIASKELE (634 aa)) are lumenal. Residues asparagine 44, asparagine 54, and asparagine 128 are each glycosylated (N-linked (GlcNAc...) asparagine). A disulfide bond links cysteine 49 and cysteine 61. Residues cysteine 139 and cysteine 158 are joined by a disulfide bond. Asparagine 186 and asparagine 203 each carry an N-linked (GlcNAc...) asparagine glycan. 2 cysteine pairs are disulfide-bonded: cysteine 194-cysteine 212 and cysteine 229-cysteine 247. Asparagine 263, asparagine 386, asparagine 434, asparagine 463, asparagine 507, asparagine 529, asparagine 561, asparagine 572, asparagine 579, asparagine 593, and asparagine 611 each carry an N-linked (GlcNAc...) asparagine glycan. Cysteine 585 and cysteine 619 are oxidised to a cystine. The helical transmembrane segment at 669 to 689 (FITLIVGFSILVFSLIVTYCI) threads the bilayer. The Cytoplasmic segment spans residues 690–708 (NAKADVLFVAPREPGAVSY).

This sequence belongs to the nicastrin family. In terms of assembly, component of the gamma-secretase complex. The functional gamma-secretase complex is composed of at least four polypeptides: a presenilin homodimer (PSEN1 or PSEN2), nicastrin (NCSTN), APH1 (APH1A or APH1B) and PEN2. Binds to proteolytic processed C-terminal fragments C83 and C99 of the amyloid precursor protein (APP). Interacts with PSEN1 and PSEN2. N-glycosylated.

It is found in the membrane. The protein resides in the cytoplasmic vesicle membrane. It localises to the melanosome. Its function is as follows. Essential subunit of the gamma-secretase complex, an endoprotease complex that catalyzes the intramembrane cleavage of integral membrane proteins such as Notch receptors and APP (amyloid-beta precursor protein). The gamma-secretase complex plays a role in Notch and Wnt signaling cascades and regulation of downstream processes via its role in processing key regulatory proteins, and by regulating cytosolic CTNNB1 levels. The chain is Nicastrin (Ncstn) from Rattus norvegicus (Rat).